The following is a 157-amino-acid chain: S-ribosylhomocysteine lyase (157 aa).

Fe cation-binding residues include His-60, His-64, and Cys-127.

This sequence belongs to the LuxS family. As to quaternary structure, homodimer. Fe cation serves as cofactor.

The catalysed reaction is S-(5-deoxy-D-ribos-5-yl)-L-homocysteine = (S)-4,5-dihydroxypentane-2,3-dione + L-homocysteine. Functionally, involved in the synthesis of autoinducer 2 (AI-2) which is secreted by bacteria and is used to communicate both the cell density and the metabolic potential of the environment. The regulation of gene expression in response to changes in cell density is called quorum sensing. Catalyzes the transformation of S-ribosylhomocysteine (RHC) to homocysteine (HC) and 4,5-dihydroxy-2,3-pentadione (DPD). This Helicobacter acinonychis (strain Sheeba) protein is S-ribosylhomocysteine lyase.